We begin with the raw amino-acid sequence, 117 residues long: Large ribosomal subunit protein uL18 (117 aa).

The protein belongs to the universal ribosomal protein uL18 family. Part of the 50S ribosomal subunit; part of the 5S rRNA/L5/L18/L25 subcomplex. Contacts the 5S and 23S rRNAs.

Its function is as follows. This is one of the proteins that bind and probably mediate the attachment of the 5S RNA into the large ribosomal subunit, where it forms part of the central protuberance. This chain is Large ribosomal subunit protein uL18, found in Pectobacterium atrosepticum (strain SCRI 1043 / ATCC BAA-672) (Erwinia carotovora subsp. atroseptica).